Reading from the N-terminus, the 194-residue chain is Calcium channel flower (194 aa).

Transmembrane regions (helical) follow at residues Leu35–Ile55, Ile66–Glu88, and Gly107–Phe127.

It belongs to the calcium channel flower family. As to quaternary structure, homomultimer. Associates with the dally/ magu complex.

It is found in the cell membrane. It localises to the cytoplasmic vesicle. Its subcellular location is the secretory vesicle. The protein localises to the synaptic vesicle membrane. The protein resides in the presynaptic cell membrane. It is found in the endosome. With respect to regulation, channel activity is inhibited by La(3+), which reduces Ca(2+) influx and thus inhibits it's function in promoting activity-dependent bulk endocytosis (ADBE) in response to high stimuli. Functionally, transmembrane protein which mediates synaptic endocytosis, fitness-based cell culling, neuronal culling, morphogen gradient scaling, and calcium transport. Regulates synaptic endocytosis and hence couples exo- with endocytosis. Controls two major modes of synaptic vesicle (SV) endocytosis in the synaptic boutons of neuromuscular junctions (NMJs); Ca(2+) channel-independent Clathrin-mediated endocytosis (CME) in response to mild stimulation, and Ca(2+) channel-dependent activity-dependent bulk endocytosis (ADBE) in response to strong stimulation. Functions in ADBE and subsequent SV reformation from bulk endosomes by initiating Ca(2+) channel-dependent phosphatidylinositol 4,5-bisphosphate (PtdIns(4,5)P2) compartmentalization in synaptic boutons. There it acts at the periactive zone to provide the low Ca(2+) levels required to initiate Calcineurin activation and upregulate PtdIns(4,5)P2. Conversely PtdIns(4,5)P2 enhances fwe Ca(2+) channel-activity, establishing a positive feedback loop that induces PtdIns(4,5)P2 microdomain at the periactive zone. These microdomains trigger bulk membrane invagination (i.e. ADBE) by triggering actin polymerization while also promoting localization of fwe to bulk endosomes, thereby removing the ADBE trigger to reduce endocytosis and prevent excess membrane uptake. PtdIns(4,5)P2 then promotes SV reformation from the bulk endosomes, to coordinate ADBE and subsequent SV reformation. Different combinations of the flower isoforms at the cell membrane are also required for the identification and elimination of suboptimal or supernumerary cells during development, regeneration, and adulthood. Required for the recognition and elimination of unfit cells in the developing wing during cell competition. In the developing pupal retina, mediates the elimination of unwanted postmitotic neurons, including supernumerary photoreceptor neurons that form at the periphery of the retina and are contained within incomplete ommatidia units. Also required for efficient elimination and replacement of old neurons by newly generated neurons during regeneration in the adult brain following mechanical injury. Downstream of the flower fitness fingerprints, cells identified as unwanted or unfit are eliminated via apoptosis through the expression of ahuizotl (azot). However, the cells marked for elimination by the flower isoforms only undergo apoptosis if additional thresholds are met; (1) their neighboring fit/healthy cells express different levels of the fwe isoforms, and (2) the levels of the protective signal SPARC expressed by the loser or unwanted cells are unable to inhibit caspase activation. These additional thresholds for flower-mediated apoptosis, allows useful cells to recover from transient and limited stress before they are unnecessarily eliminated. Functions with dally and magu in a mechanism of scaling, which utilises apoptosis to ensure that the dpp morphogen gradient, which mediates organ growth, remains proportional to the size of the growing wing. In this mechanism, fwe represses dally- and Magu-dependent activity in expanding the gradient, and dally/Magu inhibits fwe-dependent apoptosis to keep cell death rate low. When the levels of these different proteins are optimally regulated the gradient correctly scales with organ growth but when this fails, fwe-mediated apoptosis is activated to trim the developing tissue to match the correct size of the gradient. The polypeptide is Calcium channel flower (Drosophila sechellia (Fruit fly)).